Consider the following 956-residue polypeptide: Bromodomain testis-specific protein (956 aa).

Residues 26–132 (RLTNQLQFLQ…KLFMQKLSQM (107 aa)) enclose the Bromo 1 domain. At S186 the chain carries Phosphoserine. The Nuclear localization signal signature appears at 208–219 (KGVKRRADTTTP). Positions 210–239 (VKRRADTTTPTTSIAKASSESPPTLRETKP) are disordered. A compositionally biased stretch (polar residues) spans 216–231 (TTTPTTSIAKASSESP). Residues 266 to 375 (VKVTEQLKHC…DVFELHFAKI (110 aa)) form the Bromo 2 domain. Disordered regions lie at residues 391–420 (NSAQALSRESSSEASSGDASSEDSEDERVQ), 442–508 (VPLR…PMNY), 607–747 (NQLN…HSQQ), and 859–934 (LEHN…RREA). The span at 392-409 (SAQALSRESSSEASSGDA) shows a compositional bias: low complexity. A coiled-coil region spans residues 417-442 (ERVQHLAKLQEQLNAVHQQLQVLSQV). Over residues 445–463 (RKLKKKNEKSKRAPKRKKV) the composition is skewed to basic residues. The 83-residue stretch at 496 to 578 (KSEEEDNAKP…ACLRKRSLKP (83 aa)) folds into the NET domain. Residues 625–640 (PPPPPPPPPPPPPPPE) are compositionally biased toward pro residues. Positions 649-688 (DSSSSSGSGSGSSSSSSGSSSSSSSSGSASSSSDSSSSDS) are enriched in low complexity. The span at 714-724 (KQIQSSVQDIT) shows a compositional bias: polar residues. Positions 844-940 (EKEVKARTQE…RREAMAGTID (97 aa)) form a coiled coil. Composition is skewed to basic and acidic residues over residues 859–874 (LEHNAKDPKVSQENQR) and 915–934 (LLKDRNLAREKEQERRRREA).

Belongs to the BET family. As to quaternary structure, interacts with SMARCE1. Interacts with mRNA splicing machinery proteins SRSF2, DDX5, HNRNPK and TARDBP. Interacts with the acetylated N-terminus of histone H1, H2, H3 and H4. Interacts with P-TEFb components CDK9 and CCNT1/cyclin-T1. Post-translationally, ubiquitinated in a SPOP-dependent manner, leading to proteasomal degradation. As to expression, testis-specific. Expressed in germinal cells from the early meiotic (pachytene) spermatocytes and during spermiogenesis in the round and elongating spermatids until the condensed late spermatids. No expression seen in spermatogonia.

It localises to the nucleus. Its function is as follows. Testis-specific chromatin protein that specifically binds histone H4 acetylated at 'Lys-5' and 'Lys-8' (H4K5ac and H4K8ac, respectively) and plays a key role in spermatogenesis. Required in late pachytene spermatocytes: plays a role in meiotic and post-meiotic cells by binding to acetylated histones at the promoter of specific meiotic and post-meiotic genes, facilitating their activation at the appropriate time. In the post-meiotic phase of spermatogenesis, binds to hyperacetylated histones and participates in their general removal from DNA. Also recognizes and binds a subset of butyrylated histones: able to bind histone H4 butyrylated at 'Lys-8' (H4K8ac), while it is not able to bind H4 butyrylated at 'Lys-5' (H4K5ac). Also acts as a component of the splicing machinery in pachytene spermatocytes and round spermatids and participates in 3'-UTR truncation of specific mRNAs in post-meiotic spermatids. Required for chromocenter organization, a structure comprised of peri-centromeric heterochromatin. The protein is Bromodomain testis-specific protein (Brdt) of Mus musculus (Mouse).